The sequence spans 496 residues: Chaperone SurA (496 aa).

The first 42 residues, 1 to 42, serve as a signal peptide directing secretion; that stretch reads MACKSTAVRSATRVAPTRRLGMVTGALVALMAGAALLPAAHA. The interval 53-80 is disordered; it reads RGIFTTPDASPSQPLLRGTLPGPSTASG. PpiC domains lie at 235-337 and 349-447; these read VQEY…KLVD and VAQT…QVEG.

It localises to the periplasm. It carries out the reaction [protein]-peptidylproline (omega=180) = [protein]-peptidylproline (omega=0). Functionally, chaperone involved in the correct folding and assembly of outer membrane proteins. Recognizes specific patterns of aromatic residues and the orientation of their side chains, which are found more frequently in integral outer membrane proteins. May act in both early periplasmic and late outer membrane-associated steps of protein maturation. The sequence is that of Chaperone SurA from Ralstonia nicotianae (strain ATCC BAA-1114 / GMI1000) (Ralstonia solanacearum).